Consider the following 323-residue polypeptide: Mitochondrial glutamate carrier 1 (323 aa).

Solcar repeat units lie at residues 6 to 93 (ISLP…FRHQ), 101 to 214 (LTLL…LNQL), and 223 to 312 (SPFY…GIAE). The next 6 helical transmembrane spans lie at 12–32 (LING…IDLA), 62–82 (YFGM…EKAI), 107–127 (MLAG…MEML), 189–209 (GLGA…PLFA), 223–243 (SPFY…AVAV), and 292–312 (ALVI…GIAE).

Belongs to the mitochondrial carrier (TC 2.A.29) family. As to expression, expressed at high levels in brain, liver, and pancreas.

Its subcellular location is the mitochondrion inner membrane. The enzyme catalyses L-glutamate(in) + H(+)(in) = L-glutamate(out) + H(+)(out). Its function is as follows. Mitochondrial glutamate/H(+) symporter. Responsible for the transport of glutamate from the cytosol into the mitochondrial matrix with the concomitant import of a proton. Plays a role in the control of glucose-stimulated insulin secretion. The polypeptide is Mitochondrial glutamate carrier 1 (Homo sapiens (Human)).